The sequence spans 613 residues: WD40 repeat-containing protein HOS15 (613 aa).

Residues 5 to 37 (TSVELNFLVFRYLQESGFTHAAFTLGYEAGINK) enclose the LisH domain. 2 disordered regions span residues 101-174 (KKRK…REKM) and 193-214 (EIER…KQLG). 8 WD repeats span residues 263 to 302 (GHTS…FKAV), 322 to 362 (EKSK…STLS), 363 to 402 (KHKG…WKQQ), 405 to 443 (FHSG…PAKT), 446 to 485 (GHQG…FVHD), 488 to 536 (EHTK…MLCS), 539 to 580 (GHRE…KTYT), and 582 to 613 (NGGI…DFRM).

The protein resides in the nucleus. Its function is as follows. Acts as a repressor of cold stress-regulated gene expression. Interacts specifically with and promotes deacetylation of histone H4. Plays a role in gene regulation for plant acclimation and tolerance to cold stress. The protein is WD40 repeat-containing protein HOS15 of Arabidopsis thaliana (Mouse-ear cress).